The following is a 283-amino-acid chain: Nucleoid occlusion protein (283 aa).

A DNA-binding region (H-T-H motif) is located at residues E148 to L167.

It belongs to the ParB family.

The protein resides in the cytoplasm. The protein localises to the nucleoid. Its function is as follows. Effects nucleoid occlusion by binding relatively nonspecifically to DNA and preventing the assembly of the division machinery in the vicinity of the nucleoid, especially under conditions that disturb the cell cycle. It helps to coordinate cell division and chromosome segregation by preventing the formation of the Z ring through the nucleoid, which would cause chromosome breakage. The chain is Nucleoid occlusion protein (noc) from Bacillus subtilis (strain 168).